A 61-amino-acid chain; its full sequence is Protein TfaX (61 aa).

The protein belongs to the tfa family.

Might play a role in cell growth during glycolysis. The polypeptide is Protein TfaX (tfaX) (Escherichia coli (strain K12)).